We begin with the raw amino-acid sequence, 346 residues long: Uroporphyrinogen decarboxylase (346 aa).

Substrate contacts are provided by residues 26 to 30 (RQAGR), Asp76, Tyr153, Ser208, and His323.

The protein belongs to the uroporphyrinogen decarboxylase family. In terms of assembly, homodimer.

The protein localises to the cytoplasm. It catalyses the reaction uroporphyrinogen III + 4 H(+) = coproporphyrinogen III + 4 CO2. The protein operates within porphyrin-containing compound metabolism; protoporphyrin-IX biosynthesis; coproporphyrinogen-III from 5-aminolevulinate: step 4/4. Its function is as follows. Catalyzes the decarboxylation of four acetate groups of uroporphyrinogen-III to yield coproporphyrinogen-III. This is Uroporphyrinogen decarboxylase from Prochlorococcus marinus (strain MIT 9301).